A 277-amino-acid polypeptide reads, in one-letter code: Digeranylgeranylglyceryl phosphate synthase (277 aa).

A run of 8 helical transmembrane segments spans residues 16-36, 40-60, 93-113, 129-149, 153-173, 199-218, 222-244, and 253-273; these read ILAG…IPPV, ILIF…NDYF, FIGL…ALGA, FIGN…GAVG, IDLA…REIM, SGII…FLPV, IGLG…IDVL, and GQKI…LGAL.

It belongs to the UbiA prenyltransferase family. DGGGP synthase subfamily. The cofactor is Mg(2+).

It is found in the cell membrane. The catalysed reaction is sn-3-O-(geranylgeranyl)glycerol 1-phosphate + (2E,6E,10E)-geranylgeranyl diphosphate = 2,3-bis-O-(geranylgeranyl)-sn-glycerol 1-phosphate + diphosphate. The protein operates within membrane lipid metabolism; glycerophospholipid metabolism. In terms of biological role, prenyltransferase that catalyzes the transfer of the geranylgeranyl moiety of geranylgeranyl diphosphate (GGPP) to the C2 hydroxyl of (S)-3-O-geranylgeranylglyceryl phosphate (GGGP). This reaction is the second ether-bond-formation step in the biosynthesis of archaeal membrane lipids. The polypeptide is Digeranylgeranylglyceryl phosphate synthase (Pyrococcus horikoshii (strain ATCC 700860 / DSM 12428 / JCM 9974 / NBRC 100139 / OT-3)).